The following is a 693-amino-acid chain: Sister chromatid cohesion 1 protein 3 (693 aa).

4 disordered regions span residues 167-250, 262-361, 460-511, and 545-573; these read IPMD…PGTV, DLSP…KNFD, PVSP…TFDN, and TQSG…GQRN. Basic and acidic residues-rich tracts occupy residues 178–201 and 232–243; these read VSRH…EPRD and TEERIPNSERND. Residues 264-277 show a composition bias toward polar residues; it reads SPTSHPSFAAQQQD. Positions 278 to 295 are enriched in basic and acidic residues; sequence VRVERTESLDETLNEKEP. The span at 316–325 shows a compositional bias: low complexity; sequence RSGSPGSAAG. 2 stretches are compositionally biased toward polar residues: residues 465–483 and 545–564; these read PDST…QQTE and TQSG…TSTV.

The protein belongs to the rad21 family. Component of the cohesin complex. In terms of tissue distribution, low expression in shoots, buds, siliques, leaves and roots. Found in, but not limited to, actively dividing cells: in procambium, protoderm and ground meristem in roots, and in shoot and floral meristems.

The protein localises to the nucleus. Its function is as follows. May be involved in sister chromatid cohesion during mitosis. This chain is Sister chromatid cohesion 1 protein 3 (SYN3), found in Arabidopsis thaliana (Mouse-ear cress).